The following is a 146-amino-acid chain: Snaclec anticoagulant protein subunit B (146 aa).

An N-terminal signal peptide occupies residues 1-23; sequence MGRFIFVSFGLLVLFLSLSGTAA. The 123-residue stretch at 24-146 folds into the C-type lectin domain; it reads DCPSDWSSYE…IANFVCEFQA (123 aa). Cystine bridges form between Cys25–Cys36, Cys53–Cys142, and Cys119–Cys134. Residues Ser64, Gln66, and Glu70 each coordinate Ca(2+). Residue Glu143 participates in Ca(2+) binding.

It belongs to the snaclec family. As to quaternary structure, heterodimer with subunit A of agkisacutacin or AaACP; disulfide-linked. In terms of tissue distribution, expressed by the venom gland.

Its subcellular location is the secreted. Its function is as follows. Anticoagulant protein which binds to the gamma-carboxyglutamic acid-domain regions of factors IX and factor X in the presence of calcium with a 1 to 1 stoichiometry. Also inhibits platelet aggregation by binding to platelet glycoprotein Ibalpha (GP1BA) and functioning as a blocker of vWF. Is devoid of hemorrhagic and lethal activities. Possesses antithrombotic and thrombolytic activities. Also hydrolyzes the Aalpha-chain of fibrinogen. Does not affect the Bbeta-chain and the gamma chain. The polypeptide is Snaclec anticoagulant protein subunit B (Deinagkistrodon acutus (Hundred-pace snake)).